The primary structure comprises 453 residues: tRNA-2-methylthio-N(6)-dimethylallyladenosine synthase (453 aa).

The MTTase N-terminal domain occupies 7–123 (GTYWITTFGC…LDTLLSQVEA (117 aa)). Residues cysteine 16, cysteine 52, cysteine 86, cysteine 158, cysteine 162, and cysteine 165 each coordinate [4Fe-4S] cluster. Residues 144–381 (RDSSLCAWVN…NALVERKAKA (238 aa)) enclose the Radical SAM core domain. One can recognise a TRAM domain in the interval 384 to 447 (QRYLGRVEEV…AFSLSGSAQA (64 aa)).

This sequence belongs to the methylthiotransferase family. MiaB subfamily. As to quaternary structure, monomer. The cofactor is [4Fe-4S] cluster.

The protein localises to the cytoplasm. It carries out the reaction N(6)-dimethylallyladenosine(37) in tRNA + (sulfur carrier)-SH + AH2 + 2 S-adenosyl-L-methionine = 2-methylsulfanyl-N(6)-dimethylallyladenosine(37) in tRNA + (sulfur carrier)-H + 5'-deoxyadenosine + L-methionine + A + S-adenosyl-L-homocysteine + 2 H(+). Its function is as follows. Catalyzes the methylthiolation of N6-(dimethylallyl)adenosine (i(6)A), leading to the formation of 2-methylthio-N6-(dimethylallyl)adenosine (ms(2)i(6)A) at position 37 in tRNAs that read codons beginning with uridine. In Synechococcus sp. (strain RCC307), this protein is tRNA-2-methylthio-N(6)-dimethylallyladenosine synthase.